The primary structure comprises 293 residues: MSLIDWFAARRKDQFVGKVSQDADEGDGLWVKCSECSQVAYRKDLISNFNVCSNCGHHNRINSDERINIIADKNSFEEFDSLLSPTDPLGFKDRRSYADRIKESQAGTGLRDGVVTGICSVNSMPLALAVMDFRFMGGSMGSVVGEKITRIIERATLENFPILIVCASGGARMQEGMLSLMQMAKISGALKKHKEKNLLYMPLLTHPTTGGVTASFAMLGDLILAEPKALIGFAGRRVIEQTLREKLPDNFQTAEYLLEHGFVDVIVKRKDLKTTLAKILKIHGVKELAEANT.

The CoA carboxyltransferase N-terminal domain maps to 29-293 (LWVKCSECSQ…GVKELAEANT (265 aa)). C33, C36, C52, and C55 together coordinate Zn(2+). The C4-type zinc-finger motif lies at 33–55 (CSECSQVAYRKDLISNFNVCSNC).

This sequence belongs to the AccD/PCCB family. As to quaternary structure, acetyl-CoA carboxylase is a heterohexamer composed of biotin carboxyl carrier protein (AccB), biotin carboxylase (AccC) and two subunits each of ACCase subunit alpha (AccA) and ACCase subunit beta (AccD). It depends on Zn(2+) as a cofactor.

The protein localises to the cytoplasm. It carries out the reaction N(6)-carboxybiotinyl-L-lysyl-[protein] + acetyl-CoA = N(6)-biotinyl-L-lysyl-[protein] + malonyl-CoA. The protein operates within lipid metabolism; malonyl-CoA biosynthesis; malonyl-CoA from acetyl-CoA: step 1/1. In terms of biological role, component of the acetyl coenzyme A carboxylase (ACC) complex. Biotin carboxylase (BC) catalyzes the carboxylation of biotin on its carrier protein (BCCP) and then the CO(2) group is transferred by the transcarboxylase to acetyl-CoA to form malonyl-CoA. The sequence is that of Acetyl-coenzyme A carboxylase carboxyl transferase subunit beta from Prochlorococcus marinus (strain MIT 9301).